The chain runs to 756 residues: Virulence factor MDV010 (756 aa).

Residues 1–30 (MPSKSIADHHAGYGVALAIVALLLIHGTAL) form the signal peptide. Residues 96 to 120 (EEHITLSSPRTSTKTTNENGHEKDS) are disordered. The segment covering 100-113 (TLSSPRTSTKTTNE) has biased composition (polar residues). 12 N-linked (GlcNAc...) asparagine; by host glycosylation sites follow: N222, N241, N287, N423, N495, N542, N552, N580, N660, N684, N715, and N744.

Its subcellular location is the secreted. Its function is as follows. May play a role in host immune modulation since the protein is secreted and provides an advantage for growth in vivo while it is completely dispensable in cell culture. This chain is Virulence factor MDV010 (MDV010), found in Gallid herpesvirus 2 (strain Chicken/Md5/ATCC VR-987) (GaHV-2).